Reading from the N-terminus, the 75-residue chain is DNA-directed RNA polymerase subunit omega (75 aa).

It belongs to the RNA polymerase subunit omega family. In terms of assembly, in cyanobacteria the RNAP catalytic core is composed of 2 alpha, 1 beta, 1 beta', 1 gamma and 1 omega subunit. When a sigma factor is associated with the core the holoenzyme is formed, which can initiate transcription.

The enzyme catalyses RNA(n) + a ribonucleoside 5'-triphosphate = RNA(n+1) + diphosphate. Promotes RNA polymerase assembly. Latches the N- and C-terminal regions of the beta' subunit thereby facilitating its interaction with the beta and alpha subunits. The chain is DNA-directed RNA polymerase subunit omega from Synechococcus sp. (strain CC9311).